A 354-amino-acid polypeptide reads, in one-letter code: Biotin synthase (354 aa).

Residues 41–265 (NEVQISRLLS…LMPHSRVRLS (225 aa)) enclose the Radical SAM core domain. [4Fe-4S] cluster-binding residues include cysteine 56, cysteine 60, and cysteine 63. [2Fe-2S] cluster is bound by residues cysteine 100, cysteine 131, cysteine 191, and arginine 263.

This sequence belongs to the radical SAM superfamily. Biotin synthase family. As to quaternary structure, homodimer. Requires [4Fe-4S] cluster as cofactor. [2Fe-2S] cluster is required as a cofactor.

It carries out the reaction (4R,5S)-dethiobiotin + (sulfur carrier)-SH + 2 reduced [2Fe-2S]-[ferredoxin] + 2 S-adenosyl-L-methionine = (sulfur carrier)-H + biotin + 2 5'-deoxyadenosine + 2 L-methionine + 2 oxidized [2Fe-2S]-[ferredoxin]. It functions in the pathway cofactor biosynthesis; biotin biosynthesis; biotin from 7,8-diaminononanoate: step 2/2. Catalyzes the conversion of dethiobiotin (DTB) to biotin by the insertion of a sulfur atom into dethiobiotin via a radical-based mechanism. This is Biotin synthase from Shewanella woodyi (strain ATCC 51908 / MS32).